A 746-amino-acid chain; its full sequence is NAD(P)H-quinone oxidoreductase subunit 5, chloroplastic (746 aa).

16 helical membrane-spanning segments follow: residues 9 to 29 (WIIPFLTLAVPILIGLGLLLV), 39 to 59 (IWAFPSVLLLSIVMVFSTNLS), 89 to 109 (IDSLTSIMSILIATVGMMVLI), 125 to 145 (FAYMSFFNTSMLGLVISPNLI), 147 to 167 (IYIFWELVGMCSYLSIGFWFT), 185 to 205 (GDFGLLLGILGLYWIAGSFEF), 222 to 242 (NVLNSSFAILCASLLFLGAVA), 261 to 281 (TPISALIHAATMVAAGIFLVA), 283 to 303 (LLPLLTVIPYIMNLISLIGVI), 330 to 350 (LGYIMLASGIGSYRAALFHSI), 357 to 377 (ALLFLGSGSIIHSMEPILGYS), 399 to 419 (ATFLLGTLSLCGIPPLACFWS), 428 to 448 (WLYSPIFAIIASSTTGLTAFY), 545 to 565 (TMLFPLLLLAILTLFVGSVGI), 608 to 628 (IYSVSIAFFGILIANLLYGSV), and 726 to 746 (LFFSLSSLSIALILVYFYLYF).

It belongs to the complex I subunit 5 family. In terms of assembly, NDH is composed of at least 16 different subunits, 5 of which are encoded in the nucleus.

It is found in the plastid. The protein resides in the chloroplast thylakoid membrane. The catalysed reaction is a plastoquinone + NADH + (n+1) H(+)(in) = a plastoquinol + NAD(+) + n H(+)(out). The enzyme catalyses a plastoquinone + NADPH + (n+1) H(+)(in) = a plastoquinol + NADP(+) + n H(+)(out). Its function is as follows. NDH shuttles electrons from NAD(P)H:plastoquinone, via FMN and iron-sulfur (Fe-S) centers, to quinones in the photosynthetic chain and possibly in a chloroplast respiratory chain. The immediate electron acceptor for the enzyme in this species is believed to be plastoquinone. Couples the redox reaction to proton translocation, and thus conserves the redox energy in a proton gradient. The chain is NAD(P)H-quinone oxidoreductase subunit 5, chloroplastic (ndhF) from Amborella trichopoda.